The following is a 309-amino-acid chain: Probable manganese-dependent inorganic pyrophosphatase (309 aa).

Positions 9, 13, 15, 75, 97, and 149 each coordinate Mn(2+).

This sequence belongs to the PPase class C family. It depends on Mn(2+) as a cofactor.

The protein resides in the cytoplasm. It carries out the reaction diphosphate + H2O = 2 phosphate + H(+). The polypeptide is Probable manganese-dependent inorganic pyrophosphatase (Bacillus licheniformis (strain ATCC 14580 / DSM 13 / JCM 2505 / CCUG 7422 / NBRC 12200 / NCIMB 9375 / NCTC 10341 / NRRL NRS-1264 / Gibson 46)).